The chain runs to 85 residues: Small ribosomal subunit protein uS15c (85 aa).

The protein belongs to the universal ribosomal protein uS15 family. As to quaternary structure, part of the 30S ribosomal subunit.

Its subcellular location is the plastid. The protein resides in the chloroplast. In Chaetosphaeridium globosum (Charophycean green alga), this protein is Small ribosomal subunit protein uS15c (rps15).